A 744-amino-acid polypeptide reads, in one-letter code: Polyribonucleotide nucleotidyltransferase (744 aa).

Residues Asp487 and Asp493 each contribute to the Mg(2+) site. The KH domain maps to 554–613 (PSTTTLKVDKDKIRDIIGPGGKVIKEICETSGAKIDISDDGTVSIYASDKDKLKVALDKV). Residues 623-691 (GEVFNGTVMK…NKGKAKLTIK (69 aa)) form the S1 motif domain. Residues 691 to 744 (KNAEKDKSSANPKPKNSPKEHQEPEKRDNGKKRAWNEDNNAETTEVVTERKYFS) are disordered. A compositionally biased stretch (basic and acidic residues) spans 707-718 (SPKEHQEPEKRD). Residues 727–736 (EDNNAETTEV) are compositionally biased toward polar residues.

Belongs to the polyribonucleotide nucleotidyltransferase family. It depends on Mg(2+) as a cofactor.

The protein localises to the cytoplasm. The enzyme catalyses RNA(n+1) + phosphate = RNA(n) + a ribonucleoside 5'-diphosphate. Functionally, involved in mRNA degradation. Catalyzes the phosphorolysis of single-stranded polyribonucleotides processively in the 3'- to 5'-direction. The polypeptide is Polyribonucleotide nucleotidyltransferase (Rickettsia bellii (strain OSU 85-389)).